We begin with the raw amino-acid sequence, 74 residues long: UPF0741 protein BcerKBAB4_5177 (74 aa).

Belongs to the UPF0741 family.

This Bacillus mycoides (strain KBAB4) (Bacillus weihenstephanensis) protein is UPF0741 protein BcerKBAB4_5177.